Reading from the N-terminus, the 107-residue chain is Heme-degrading monooxygenase (107 aa).

The region spanning 2-94 is the ABM domain; that stretch reads IIVTNTAKIT…YILDNKITYY (93 aa). A Fe cation-binding site is contributed by Asn-6. His-76 is a binding site for heme.

The protein belongs to the antibiotic biosynthesis monooxygenase family. Heme-degrading monooxygenase IsdG subfamily. Homodimer.

It is found in the cytoplasm. The enzyme catalyses heme b + 3 reduced [NADPH--hemoprotein reductase] + 3 O2 = biliverdin IXalpha + CO + Fe(2+) + 3 oxidized [NADPH--hemoprotein reductase] + 3 H2O + H(+). Functionally, allows bacterial pathogens to use the host heme as an iron source. Catalyzes the oxidative degradation of the heme macrocyclic porphyrin ring to the biliverdin in the presence of a suitable electron donor such as ascorbate or NADPH--cytochrome P450 reductase, with subsequent release of free iron. This Bacillus thuringiensis subsp. konkukian (strain 97-27) protein is Heme-degrading monooxygenase.